The chain runs to 468 residues: MDGKSNYSRLLIALLMILFFGGIVLQYICSTSDWQLLHLASLSSRLGSRAPGDRLNGAGAGDPYSSEDGALVRFVPRFNFTTKDLSRAVDFHIKGDDVIVFLHIQKTGGTTFGRHLVRNIQLERPCECHAGQKKCTCYRPGKRDTWLFSRFSTGWSCGLHADWTELTNCVPSFMSNRESQERRMTPSRNYYYITILRDPVWRYLSEWRHVQRGATWKASKHMCDGRLPTLTELPSCYPGDDWSGCSLEEFMVCPYNLANNRQTRMLADLSLVGCYNLTVMSENQRWAMLLESAKRNLRNMAFFGLTEYQRKTQYLFEHTFRLSFIAPFTQLNGTRAASVEVEPETQRRIRELNQWDVELYEYARDLFLQRFQFARQQERREARQRRIQERRKLRAKVKSWLGVTGKAVFKPTKEPPMTEQSPAFAEEKQADAERTLESETEGQVEENWLEEDDGEIMLDYLENVEQWR.

Topologically, residues M1–R9 are cytoplasmic. A helical; Signal-anchor for type II membrane protein membrane pass occupies residues L10 to S30. The Lumenal segment spans residues T31–R468. N79 carries an N-linked (GlcNAc...) asparagine glycan. 3'-phosphoadenylyl sulfate is bound at residue H103–T111. Residues K133–K134, R150, W155, and H160 each bind substrate. The active-site Proton acceptor is H160. Residues R197 and S205 each coordinate 3'-phosphoadenylyl sulfate. 2 residues coordinate substrate: H209 and W216. N276 carries an N-linked (GlcNAc...) asparagine glycan. Residue T329–L331 participates in 3'-phosphoadenylyl sulfate binding. N332 is a glycosylation site (N-linked (GlcNAc...) asparagine). R335–A336 serves as a coordination point for 3'-phosphoadenylyl sulfate. Positions F409 to N447 are disordered. The span at A425 to E437 shows a compositional bias: basic and acidic residues. The segment covering S438 to N447 has biased composition (acidic residues).

The protein belongs to the sulfotransferase 6 family. As to expression, expressed ubiquitously during gastrulation. During early somitogenesis, strong expression in head and presumptive brain. During mid-somitogenesis, strong expression in eye, hindbrain and somitic boundaries and weak expression in tail bud. During late somitogenesis, strong expression in eye, hindbrain, branchial arch primordia, spinal cord and ventral medial somites. At 24 hours post-fertilization (hpf), strong expression throughout the head, with expression receeding from the trunk spinal cord, ventral medial somites and somitic boundaries; expressed in cells surrounding vascular structures of the dorsal aorta and caudal vein in the tail. At 36 hpf, expressed in lens, optic stalk, hindbrain and pectoral fin. At 48 hpf, expressed in eye, brain, otic vesicle and branchial arches.

It localises to the membrane. It carries out the reaction alpha-D-glucosaminyl-[heparan sulfate](n) + 3'-phosphoadenylyl sulfate = 6-sulfo-alpha-D-glucosaminyl-[heparan sulfate](n) + adenosine 3',5'-bisphosphate + H(+). 6-O-sulfation enzyme which catalyzes the transfer of sulfate from 3'-phosphoadenosine 5'-phosphosulfate (PAPS) to position 6 of the N-sulfoglucosamine residue (GlcNS) of heparan sulfate. Required for muscle development and angiogenesis. In Danio rerio (Zebrafish), this protein is Heparan-sulfate 6-O-sulfotransferase 2 (hs6st2).